A 135-amino-acid chain; its full sequence is Small ribosomal subunit protein bS16 (135 aa).

The interval 106 to 135 is disordered; it reads TERRQKRLVVKSRRRQAKKEAEGKAAGAEA. A compositionally biased stretch (basic residues) spans 109–122; it reads RQKRLVVKSRRRQA.

It belongs to the bacterial ribosomal protein bS16 family.

In Chlorobium phaeobacteroides (strain DSM 266 / SMG 266 / 2430), this protein is Small ribosomal subunit protein bS16.